A 468-amino-acid polypeptide reads, in one-letter code: 6-phospho-beta-galactosidase 2 (468 aa).

D-galactose 6-phosphate contacts are provided by glutamine 19, histidine 116, asparagine 159, glutamate 160, and asparagine 297. Glutamate 160 functions as the Proton donor in the catalytic mechanism. Glutamate 375 (nucleophile) is an active-site residue. The D-galactose 6-phosphate site is built by serine 428, tryptophan 429, lysine 435, and tyrosine 437.

It belongs to the glycosyl hydrolase 1 family.

It carries out the reaction a 6-phospho-beta-D-galactoside + H2O = D-galactose 6-phosphate + an alcohol. It functions in the pathway carbohydrate metabolism; lactose degradation; D-galactose 6-phosphate and beta-D-glucose from lactose 6-phosphate: step 1/1. This chain is 6-phospho-beta-galactosidase 2, found in Streptococcus pneumoniae (strain ATCC BAA-255 / R6).